Here is a 250-residue protein sequence, read N- to C-terminus: Proteasome subunit alpha type-4-1 (250 aa).

This sequence belongs to the peptidase T1A family. In terms of assembly, the 26S proteasome consists of a 20S proteasome core and two 19S regulatory subunits. The 20S proteasome core is composed of 28 subunits that are arranged in four stacked rings, resulting in a barrel-shaped structure. The two end rings are each formed by seven alpha subunits, and the two central rings are each formed by seven beta subunits. The catalytic chamber with the active sites is on the inside of the barrel.

The protein resides in the cytoplasm. It is found in the nucleus. Its function is as follows. The proteasome is a multicatalytic proteinase complex which is characterized by its ability to cleave peptides with Arg, Phe, Tyr, Leu, and Glu adjacent to the leaving group at neutral or slightly basic pH. The proteasome has an ATP-dependent proteolytic activity. The chain is Proteasome subunit alpha type-4-1 from Oryza sativa subsp. indica (Rice).